Here is a 416-residue protein sequence, read N- to C-terminus: Peptide chain release factor subunit 1 (416 aa).

Belongs to the eukaryotic release factor 1 family. As to quaternary structure, heterodimer of two subunits, one of which binds GTP.

The protein localises to the cytoplasm. Directs the termination of nascent peptide synthesis (translation) in response to the termination codons UAA, UAG and UGA. The polypeptide is Peptide chain release factor subunit 1 (Halobacterium salinarum (strain ATCC 29341 / DSM 671 / R1)).